A 109-amino-acid polypeptide reads, in one-letter code: MMGGRGTGGKWPSAFGLLLLWGVAASALPLESGPTGQDSVQEATEGRSGLLTFLAWWHEWASQASSSTPVGGGTPGLSKSQERPPPQQPPHLDKKPCKNFFWKTFSSCK.

Positions 1–25 (MMGGRGTGGKWPSAFGLLLLWGVAA) are cleaved as a signal peptide. The propeptide occupies 26 to 93 (SALPLESGPT…PPPQQPPHLD (68 aa)). A disordered region spans residues 64–97 (ASSSTPVGGGTPGLSKSQERPPPQQPPHLDKKPC). An intrachain disulfide couples Cys97 to Cys108.

Belongs to the somatostatin family. Expressed in a subset of GABAergic cells in the cortex and hippocampus.

It localises to the secreted. The sequence is that of Cortistatin (Cort) from Mus musculus (Mouse).